The following is a 104-amino-acid chain: Large ribosomal subunit protein bL28 (104 aa).

The protein belongs to the bacterial ribosomal protein bL28 family.

The protein is Large ribosomal subunit protein bL28 of Wolbachia pipientis wMel.